The primary structure comprises 159 residues: ATP synthase subunit b (159 aa).

A helical membrane pass occupies residues 4–24 (VGINGTLIVQLVTFVILVALL).

It belongs to the ATPase B chain family. As to quaternary structure, F-type ATPases have 2 components, F(1) - the catalytic core - and F(0) - the membrane proton channel. F(1) has five subunits: alpha(3), beta(3), gamma(1), delta(1), epsilon(1). F(0) has three main subunits: a(1), b(2) and c(10-14). The alpha and beta chains form an alternating ring which encloses part of the gamma chain. F(1) is attached to F(0) by a central stalk formed by the gamma and epsilon chains, while a peripheral stalk is formed by the delta and b chains.

It is found in the cell inner membrane. Functionally, f(1)F(0) ATP synthase produces ATP from ADP in the presence of a proton or sodium gradient. F-type ATPases consist of two structural domains, F(1) containing the extramembraneous catalytic core and F(0) containing the membrane proton channel, linked together by a central stalk and a peripheral stalk. During catalysis, ATP synthesis in the catalytic domain of F(1) is coupled via a rotary mechanism of the central stalk subunits to proton translocation. Its function is as follows. Component of the F(0) channel, it forms part of the peripheral stalk, linking F(1) to F(0). The protein is ATP synthase subunit b of Acidithiobacillus ferridurans.